The primary structure comprises 559 residues: Probable D-2-hydroxyglutarate dehydrogenase, mitochondrial (559 aa).

The transit peptide at 1-80 (MARRAAAGLL…MNFEVQKRSF (80 aa)) directs the protein to the mitochondrion. The FAD-binding PCMH-type domain maps to 131 to 310 (YKGSSQLLLL…TKIAILTPAK (180 aa)).

It belongs to the FAD-binding oxidoreductase/transferase type 4 family. As to quaternary structure, homodimer. FAD is required as a cofactor.

It is found in the mitochondrion. The enzyme catalyses (R)-2-hydroxyglutarate + A = 2-oxoglutarate + AH2. Catalyzes the oxidation of D-2-hydroxyglutarate to alpha-ketoglutarate. In Oryza sativa subsp. japonica (Rice), this protein is Probable D-2-hydroxyglutarate dehydrogenase, mitochondrial (D2HGDH).